The chain runs to 262 residues: Acyl-[acyl-carrier-protein]--UDP-N-acetylglucosamine O-acyltransferase (262 aa).

This sequence belongs to the transferase hexapeptide repeat family. LpxA subfamily. As to quaternary structure, homotrimer.

The protein localises to the cytoplasm. It carries out the reaction a (3R)-hydroxyacyl-[ACP] + UDP-N-acetyl-alpha-D-glucosamine = a UDP-3-O-[(3R)-3-hydroxyacyl]-N-acetyl-alpha-D-glucosamine + holo-[ACP]. Its pathway is glycolipid biosynthesis; lipid IV(A) biosynthesis; lipid IV(A) from (3R)-3-hydroxytetradecanoyl-[acyl-carrier-protein] and UDP-N-acetyl-alpha-D-glucosamine: step 1/6. In terms of biological role, involved in the biosynthesis of lipid A, a phosphorylated glycolipid that anchors the lipopolysaccharide to the outer membrane of the cell. In Yersinia pseudotuberculosis serotype O:1b (strain IP 31758), this protein is Acyl-[acyl-carrier-protein]--UDP-N-acetylglucosamine O-acyltransferase.